The sequence spans 396 residues: Elongation factor Tu-B (396 aa).

One can recognise a tr-type G domain in the interval Lys-10–Thr-206. The interval Gly-19–Thr-26 is G1. Gly-19–Thr-26 provides a ligand contact to GTP. Thr-26 provides a ligand contact to Mg(2+). Residues Gly-60–Ser-64 form a G2 region. The segment at Asp-81–Gly-84 is G3. GTP-binding positions include Asp-81–His-85 and Asn-136–Asp-139. Residues Asn-136–Asp-139 form a G4 region. Positions Ser-174–Arg-176 are G5.

Belongs to the TRAFAC class translation factor GTPase superfamily. Classic translation factor GTPase family. EF-Tu/EF-1A subfamily. Monomer.

It localises to the cytoplasm. The catalysed reaction is GTP + H2O = GDP + phosphate + H(+). Functionally, GTP hydrolase that promotes the GTP-dependent binding of aminoacyl-tRNA to the A-site of ribosomes during protein biosynthesis. The protein is Elongation factor Tu-B of Xanthomonas campestris pv. campestris (strain ATCC 33913 / DSM 3586 / NCPPB 528 / LMG 568 / P 25).